Reading from the N-terminus, the 567-residue chain is Glutamate--tRNA ligase (567 aa).

The 'HIGH' region signature appears at 106–116 (PNPDGPLHLGN).

This sequence belongs to the class-I aminoacyl-tRNA synthetase family. Glutamate--tRNA ligase type 2 subfamily.

The protein resides in the cytoplasm. It carries out the reaction tRNA(Glu) + L-glutamate + ATP = L-glutamyl-tRNA(Glu) + AMP + diphosphate. In terms of biological role, catalyzes the attachment of glutamate to tRNA(Glu) in a two-step reaction: glutamate is first activated by ATP to form Glu-AMP and then transferred to the acceptor end of tRNA(Glu). This is Glutamate--tRNA ligase from Sulfolobus acidocaldarius (strain ATCC 33909 / DSM 639 / JCM 8929 / NBRC 15157 / NCIMB 11770).